The chain runs to 502 residues: Mannitol 2-dehydrogenase (502 aa).

37–48 (IVHVGVGGFHRA) lines the NAD(+) pocket.

It belongs to the mannitol dehydrogenase family. As to quaternary structure, monomer.

It catalyses the reaction D-mannitol + NAD(+) = D-fructose + NADH + H(+). Catalyzes the NAD(H)-dependent interconversion of D-fructose and D-mannitol in the mannitol metabolic pathway. The polypeptide is Mannitol 2-dehydrogenase (Aspergillus terreus (strain NIH 2624 / FGSC A1156)).